Reading from the N-terminus, the 455-residue chain is Probable glycine dehydrogenase (decarboxylating) subunit 1 (455 aa).

It belongs to the GcvP family. N-terminal subunit subfamily. The glycine cleavage system is composed of four proteins: P, T, L and H. In this organism, the P 'protein' is a heterodimer of two subunits.

It carries out the reaction N(6)-[(R)-lipoyl]-L-lysyl-[glycine-cleavage complex H protein] + glycine + H(+) = N(6)-[(R)-S(8)-aminomethyldihydrolipoyl]-L-lysyl-[glycine-cleavage complex H protein] + CO2. Functionally, the glycine cleavage system catalyzes the degradation of glycine. The P protein binds the alpha-amino group of glycine through its pyridoxal phosphate cofactor; CO(2) is released and the remaining methylamine moiety is then transferred to the lipoamide cofactor of the H protein. This is Probable glycine dehydrogenase (decarboxylating) subunit 1 from Francisella tularensis subsp. novicida (strain U112).